A 213-amino-acid chain; its full sequence is Endonuclease III (213 aa).

Residues 101-120 form the HhH domain; that stretch reads LEELLKLPGVGRKTANIVLW. [4Fe-4S] cluster contacts are provided by Cys-180, Cys-187, Cys-190, and Cys-196.

Belongs to the Nth/MutY family. It depends on [4Fe-4S] cluster as a cofactor.

The enzyme catalyses 2'-deoxyribonucleotide-(2'-deoxyribose 5'-phosphate)-2'-deoxyribonucleotide-DNA = a 3'-end 2'-deoxyribonucleotide-(2,3-dehydro-2,3-deoxyribose 5'-phosphate)-DNA + a 5'-end 5'-phospho-2'-deoxyribonucleoside-DNA + H(+). In terms of biological role, DNA repair enzyme that has both DNA N-glycosylase activity and AP-lyase activity. The DNA N-glycosylase activity releases various damaged pyrimidines from DNA by cleaving the N-glycosidic bond, leaving an AP (apurinic/apyrimidinic) site. The AP-lyase activity cleaves the phosphodiester bond 3' to the AP site by a beta-elimination, leaving a 3'-terminal unsaturated sugar and a product with a terminal 5'-phosphate. This is Endonuclease III from Thermotoga maritima (strain ATCC 43589 / DSM 3109 / JCM 10099 / NBRC 100826 / MSB8).